A 660-amino-acid polypeptide reads, in one-letter code: UvrABC system protein C (660 aa).

The region spanning 16–95 (ESPGVYRFRD…IKQYDPRFNV (80 aa)) is the GIY-YIG domain. Residues 208 to 243 (DAMVRRLEREMAEASAELEFERAARLRDDLAALRRA) form the UVR domain. Positions 469-501 (GEAGVESAGDPDAPAGPDAPDEPRVGTLVDPTT) are disordered. Over residues 476–486 (AGDPDAPAGPD) the composition is skewed to low complexity.

The protein belongs to the UvrC family. As to quaternary structure, interacts with UvrB in an incision complex.

Its subcellular location is the cytoplasm. The UvrABC repair system catalyzes the recognition and processing of DNA lesions. UvrC both incises the 5' and 3' sides of the lesion. The N-terminal half is responsible for the 3' incision and the C-terminal half is responsible for the 5' incision. The chain is UvrABC system protein C from Salinispora arenicola (strain CNS-205).